Consider the following 476-residue polypeptide: G-patch domain and KOW motifs-containing protein (476 aa).

Residues 1-96 (MADSKEGVLP…PGPSTDTGAL (96 aa)) are disordered. Position 2 is an N-acetylalanine (alanine 2). Lysine 5 is covalently cross-linked (Glycyl lysine isopeptide (Lys-Gly) (interchain with G-Cter in SUMO2)). The segment covering 13 to 26 (AASTAPISFGFTRT) has biased composition (polar residues). Serine 27 carries the post-translational modification Phosphoserine; by PKA. 2 positions are modified to phosphoserine: serine 35 and serine 42. Residues 43-58 (PEEKDFLKTVEGRELQ) are compositionally biased toward basic and acidic residues. Serine 115 is modified (phosphoserine). Residues 164 to 210 (VEAYGLAMLRGMGWKPGEGIGRTFNQVVKPRVNSLRPKGLGLGANLT) form the G-patch domain. Residues 203-244 (LGLGANLTEAQALTPTGPSRMPRPDEEQEKDKEDQPQGLVPG) are disordered. Positions 210 to 219 (TEAQALTPTG) are enriched in polar residues. Phosphothreonine is present on threonine 216. Residues 224 to 237 (PRPDEEQEKDKEDQ) are compositionally biased toward basic and acidic residues. A KOW 1 domain is found at 240 to 267 (GLVPGGAVVVLSGPHRGLYGKVEGLDPD). Threonine 316 carries the phosphothreonine; by PKA modification. A disordered region spans residues 327-353 (DNSERKRKHLPDRQDGPAAKSEKAAPR). Positions 337–351 (PDRQDGPAAKSEKAA) are enriched in basic and acidic residues. The KOW 2 domain occupies 415 to 442 (PKAEGDRVMVVLGPQTGRVGHLLSRDRA). A Phosphoserine modification is found at serine 471. Position 473 is a phosphothreonine (threonine 473).

Belongs to the MOS2 family. As to quaternary structure, component of the minor spliceosome, which splices U12-type introns. Interacts with PRKX. Interacts with DHX16. Interacts with PRKACB. Post-translationally, phosphorylation regulates its ability to bind RNA.

The protein resides in the nucleus. Its function is as follows. RNA-binding protein involved in pre-mRNA splicing. As a component of the minor spliceosome, involved in the splicing of U12-type introns in pre-mRNAs. In Homo sapiens (Human), this protein is G-patch domain and KOW motifs-containing protein (GPKOW).